Consider the following 408-residue polypeptide: Subtilisin-like protease 6 (408 aa).

Positions 1–20 (MGFITKAIPIVLAALSTVDG) are cleaved as a signal peptide. Residues 21–123 (AKILEAGPHA…RDTVVKATAI (103 aa)) constitute a propeptide that is removed on maturation. In terms of domain architecture, Inhibitor I9 spans 36-119 (KYIVVMKQDV…DFIERDTVVK (84 aa)). Residues 131-408 (SWGLARVGSK…GKLIYNGSGK (278 aa)) enclose the Peptidase S8 domain. Residues Asp-163 and His-194 each act as charge relay system in the active site. N-linked (GlcNAc...) asparagine glycans are attached at residues Asn-248, Asn-260, and Asn-345. Ser-354 (charge relay system) is an active-site residue. Asn-404 carries an N-linked (GlcNAc...) asparagine glycan.

This sequence belongs to the peptidase S8 family.

It localises to the secreted. Secreted subtilisin-like serine protease with keratinolytic activity that contributes to pathogenicity. The chain is Subtilisin-like protease 6 (SUB6) from Arthroderma gypseum (strain ATCC MYA-4604 / CBS 118893) (Microsporum gypseum).